The following is a 331-amino-acid chain: Adenosine deaminase (331 aa).

2 residues coordinate Zn(2+): histidine 12 and histidine 14. The substrate site is built by histidine 14, aspartate 16, and glycine 170. A Zn(2+)-binding site is contributed by histidine 197. Glutamate 200 serves as the catalytic Proton donor. Aspartate 278 is a Zn(2+) binding site. Aspartate 279 is a substrate binding site.

Belongs to the metallo-dependent hydrolases superfamily. Adenosine and AMP deaminases family. Adenosine deaminase subfamily. Zn(2+) is required as a cofactor.

The enzyme catalyses adenosine + H2O + H(+) = inosine + NH4(+). It catalyses the reaction 2'-deoxyadenosine + H2O + H(+) = 2'-deoxyinosine + NH4(+). Catalyzes the hydrolytic deamination of adenosine and 2-deoxyadenosine. The chain is Adenosine deaminase from Shewanella baltica (strain OS223).